We begin with the raw amino-acid sequence, 284 residues long: MLSKQIPLGIYEKALPAGECWLERLQLAKTLGFDFVEMSVDETDERLSRLDWSREQRLALVNAIVETGVRVPSMCLSAHRRFPLGSEDDAVRAQGLEIMRKAIQFAQDVGIRGIQLAGYDVYYQEANNETRRRFRDGLKESVEMASRAQVTLAMEIMDYPLMNSISKALGYAHYLNNPWFQLYPDIGNLSAWDNDVQMELQAGMGHIVAVHVKDTKPGVFKNVPFGEGVVDFERCFETLKQSGYCGPYLIEMWSETAEDPAAEVAKARDWVKARMAKAGMVEAA.

The protein belongs to the L-ribulose-5-phosphate 3-epimerase family.

The enzyme catalyses L-ribulose 5-phosphate = L-xylulose 5-phosphate. Its pathway is cofactor degradation; L-ascorbate degradation; D-xylulose 5-phosphate from L-ascorbate: step 3/4. Functionally, catalyzes the isomerization of L-xylulose-5-phosphate to L-ribulose-5-phosphate. Is involved in the anaerobic L-ascorbate utilization. The chain is Putative L-ribulose-5-phosphate 3-epimerase UlaE from Shigella dysenteriae serotype 1 (strain Sd197).